A 269-amino-acid polypeptide reads, in one-letter code: E3 ubiquitin-protein ligase complex slx8-rfp subunit slx8 (269 aa).

Basic and acidic residues predominate over residues 1–10 (MPPAHKRDTN). Disordered regions lie at residues 1–75 (MPPA…LNRA) and 166–196 (PRKQ…QVVP). Residues 60–70 (PSGTTSENESL) show a composition bias toward polar residues. An RING-type zinc finger spans residues 206–247 (CVICLDSPENLSCTPCGHIFCNFCILSALGTTAATQKCPVCR).

As to quaternary structure, part of an E3 ubiquitin complex including rfp1, rfp2 and slx8. Interacts with rfp1 and rfp2.

The protein localises to the nucleus. The enzyme catalyses S-ubiquitinyl-[E2 ubiquitin-conjugating enzyme]-L-cysteine + [acceptor protein]-L-lysine = [E2 ubiquitin-conjugating enzyme]-L-cysteine + N(6)-ubiquitinyl-[acceptor protein]-L-lysine.. Its pathway is protein modification; protein ubiquitination. In terms of biological role, mediates ubiquitination and subsequent desumoylation/degradation of sumoylated proteins and proteins containing SUMO-like domains. Acts as a critical suppressor of gross chromosomal rearrangements (GCRs) during normal cell cycle progression. Involved in stabilizing, restarting or resolving transiently stalled replication forks. Prevents accumulation of DNA damage during cell cycle progression. The protein is E3 ubiquitin-protein ligase complex slx8-rfp subunit slx8 (slx8) of Schizosaccharomyces pombe (strain 972 / ATCC 24843) (Fission yeast).